Reading from the N-terminus, the 227-residue chain is Interleukin-6 (227 aa).

Residues 1–22 form the signal peptide; the sequence is MASISYLLAPLVLAAVLQPTAG. Residues 24–45 form a disordered region; that stretch reads PLDAPTESPAGETSGEEAETGS. C93 and C103 are joined by a disulfide.

The protein belongs to the IL-6 superfamily. As to quaternary structure, component of a hexamer of two molecules each of IL6, IL6R and IL6ST; first binds to IL6R to associate with the signaling subunit IL6ST. After induction, highly expressed in spleen. Can also be expressed in kidney after incubation with PHA.

The protein localises to the secreted. Its function is as follows. Cytokine with a wide variety of biological functions in immunity, tissue regeneration, and metabolism. Binds to IL6R, then the complex associates to the signaling subunit IL6ST/gp130 to trigger the intracellular IL6-signaling pathway. The interaction with the membrane-bound IL6R and IL6ST stimulates 'classic signaling', whereas the binding of IL6 and soluble IL6R to IL6ST stimulates 'trans-signaling'. Alternatively, 'cluster signaling' occurs when membrane-bound IL6:IL6R complexes on transmitter cells activate IL6ST receptors on neighboring receiver cells. This chain is Interleukin-6 (il6), found in Takifugu rubripes (Japanese pufferfish).